The following is a 371-amino-acid chain: Chitin deacetylase (371 aa).

Positions 1-20 are cleaved as a signal peptide; that stretch reads MLCRLFTLFITAALACCVAA. The segment at 73–112 is disordered; sequence PKPEPEPTAVPTMAPEPTTVPPTEPSGTYPPETTPTVEPT. 2 stretches are compositionally biased toward low complexity: residues 79-89 and 102-112; these read PTAVPTMAPEP and PPETTPTVEPT. Cys164 and Cys358 form a disulfide bridge. A glycan (N-linked (GlcNAc...) asparagine) is linked at Asn167. The 186-residue stretch at 168–353 folds into the NodB homology domain; it reads GTIALTFDDG…EIKKRGLRAV (186 aa). The Proton acceptor role is filled by Asp175. Residue Asp175 coordinates acetate. Asp176, His228, and His232 together coordinate Co(2+). A glycan (N-linked (GlcNAc...) asparagine) is linked at Asn239. Acetate is bound at residue Tyr270. The active-site Proton donor is His327.

The protein belongs to the polysaccharide deacetylase family. It depends on Co(2+) as a cofactor.

The enzyme catalyses [(1-&gt;4)-N-acetyl-beta-D-glucosaminyl](n) + n H2O = chitosan + n acetate. Hydrolyzes the N-acetamido groups of N-acetyl-D-glucosamine residues in chitin to form chitosan and acetate. The chain is Chitin deacetylase from Arthroderma benhamiae (strain ATCC MYA-4681 / CBS 112371) (Trichophyton mentagrophytes).